A 78-amino-acid polypeptide reads, in one-letter code: MSRVCELTGARANNGMAVSHSHIRTKKLQQVNLQKRRLWWQEGKKWINIKISTKALKSIQKVGLDKVAKTNGVDLNKF.

Belongs to the bacterial ribosomal protein bL28 family.

In Prochlorococcus marinus (strain MIT 9515), this protein is Large ribosomal subunit protein bL28.